Consider the following 583-residue polypeptide: Aspartate--tRNA ligase (583 aa).

An L-aspartate-binding site is contributed by glutamate 173. Residues 197–200 form an aspartate region; sequence QLFK. Arginine 219 is an L-aspartate binding site. ATP contacts are provided by residues 219-221 and glutamine 228; that span reads RDE. Histidine 444 is a binding site for L-aspartate. Residue glutamate 478 participates in ATP binding. L-aspartate is bound at residue arginine 485. Residue 530–533 coordinates ATP; that stretch reads GLDR.

Belongs to the class-II aminoacyl-tRNA synthetase family. Type 1 subfamily. As to quaternary structure, homodimer.

The protein localises to the cytoplasm. It catalyses the reaction tRNA(Asp) + L-aspartate + ATP = L-aspartyl-tRNA(Asp) + AMP + diphosphate. Catalyzes the attachment of L-aspartate to tRNA(Asp) in a two-step reaction: L-aspartate is first activated by ATP to form Asp-AMP and then transferred to the acceptor end of tRNA(Asp). This chain is Aspartate--tRNA ligase, found in Azobacteroides pseudotrichonymphae genomovar. CFP2.